The sequence spans 249 residues: Triosephosphate isomerase (249 aa).

A substrate-binding site is contributed by 9 to 11 (NWK). Residue His-94 is the Electrophile of the active site. Catalysis depends on Glu-166, which acts as the Proton acceptor. Residues Gly-172, Ser-211, and 232–233 (GG) each bind substrate.

This sequence belongs to the triosephosphate isomerase family. In terms of assembly, homodimer.

It is found in the cytoplasm. The catalysed reaction is D-glyceraldehyde 3-phosphate = dihydroxyacetone phosphate. The protein operates within carbohydrate biosynthesis; gluconeogenesis. It functions in the pathway carbohydrate degradation; glycolysis; D-glyceraldehyde 3-phosphate from glycerone phosphate: step 1/1. Involved in the gluconeogenesis. Catalyzes stereospecifically the conversion of dihydroxyacetone phosphate (DHAP) to D-glyceraldehyde-3-phosphate (G3P). The chain is Triosephosphate isomerase from Moorella thermoacetica (strain ATCC 39073 / JCM 9320).